We begin with the raw amino-acid sequence, 164 residues long: Xanthine-guanine phosphoribosyltransferase (164 aa).

5-phospho-alpha-D-ribose 1-diphosphate contacts are provided by residues 41-42 (RG) and 98-106 (DDLTDTGKT). Asp-99 serves as a coordination point for Mg(2+). Asp-102 and Ile-145 together coordinate guanine. 2 residues coordinate xanthine: Asp-102 and Ile-145. Residues 102-106 (DTGKT) and 144-145 (WI) each bind GMP.

The protein belongs to the purine/pyrimidine phosphoribosyltransferase family. XGPT subfamily. As to quaternary structure, homotetramer. It depends on Mg(2+) as a cofactor.

Its subcellular location is the cell inner membrane. It catalyses the reaction GMP + diphosphate = guanine + 5-phospho-alpha-D-ribose 1-diphosphate. It carries out the reaction XMP + diphosphate = xanthine + 5-phospho-alpha-D-ribose 1-diphosphate. The catalysed reaction is IMP + diphosphate = hypoxanthine + 5-phospho-alpha-D-ribose 1-diphosphate. The protein operates within purine metabolism; GMP biosynthesis via salvage pathway; GMP from guanine: step 1/1. It functions in the pathway purine metabolism; XMP biosynthesis via salvage pathway; XMP from xanthine: step 1/1. Purine salvage pathway enzyme that catalyzes the transfer of the ribosyl-5-phosphate group from 5-phospho-alpha-D-ribose 1-diphosphate (PRPP) to the N9 position of the 6-oxopurines guanine and xanthine to form the corresponding ribonucleotides GMP (guanosine 5'-monophosphate) and XMP (xanthosine 5'-monophosphate), with the release of PPi. To a lesser extent, also acts on hypoxanthine. In Rhizobium johnstonii (strain DSM 114642 / LMG 32736 / 3841) (Rhizobium leguminosarum bv. viciae), this protein is Xanthine-guanine phosphoribosyltransferase.